Consider the following 442-residue polypeptide: Serine--tRNA ligase (442 aa).

Position 244-246 (244-246 (TAE)) interacts with L-serine. 275 to 277 (RAE) is a binding site for ATP. E298 provides a ligand contact to L-serine. Residue 365 to 368 (EISS) participates in ATP binding. Residue S400 coordinates L-serine.

The protein belongs to the class-II aminoacyl-tRNA synthetase family. Type-1 seryl-tRNA synthetase subfamily. As to quaternary structure, homodimer. The tRNA molecule binds across the dimer.

It localises to the cytoplasm. It carries out the reaction tRNA(Ser) + L-serine + ATP = L-seryl-tRNA(Ser) + AMP + diphosphate + H(+). It catalyses the reaction tRNA(Sec) + L-serine + ATP = L-seryl-tRNA(Sec) + AMP + diphosphate + H(+). The protein operates within aminoacyl-tRNA biosynthesis; selenocysteinyl-tRNA(Sec) biosynthesis; L-seryl-tRNA(Sec) from L-serine and tRNA(Sec): step 1/1. Functionally, catalyzes the attachment of serine to tRNA(Ser). Is also able to aminoacylate tRNA(Sec) with serine, to form the misacylated tRNA L-seryl-tRNA(Sec), which will be further converted into selenocysteinyl-tRNA(Sec). In Bradyrhizobium sp. (strain BTAi1 / ATCC BAA-1182), this protein is Serine--tRNA ligase.